The primary structure comprises 260 residues: Putative ABC transporter ATP-binding protein PYRAB01300 (260 aa).

In terms of domain architecture, ABC transporter spans 2-234 (IEFKDVWFWY…DLRNFSLVEP (233 aa)). 34 to 41 (GPNGSGKT) contributes to the ATP binding site.

This sequence belongs to the ABC transporter superfamily.

Its subcellular location is the cell membrane. Its function is as follows. Probably part of an ABC transporter complex. Responsible for energy coupling to the transport system. This chain is Putative ABC transporter ATP-binding protein PYRAB01300, found in Pyrococcus abyssi (strain GE5 / Orsay).